A 385-amino-acid polypeptide reads, in one-letter code: Transmembrane protein 271 (385 aa).

Transmembrane regions (helical) follow at residues 9-29 and 50-70; these read CAAL…AVGL and GAFY…AALL. A disordered region spans residues 83-111; it reads EPGPGLGVPAAPAGAPEATPGESGAAAGA. Residues 121 to 141 form a helical membrane-spanning segment; that stretch reads LLLGVLVFMLGVLSAFAGAVI. A disordered region spans residues 160–203; the sequence is PRAPGSSPGSAPGSTPGSAPGSAPGSAPGSAPGAPRARSTLDSA. Low complexity predominate over residues 163 to 197; sequence PGSSPGSAPGSTPGSAPGSAPGSAPGSAPGAPRAR. A helical transmembrane segment spans residues 219 to 239; that stretch reads VLSTVFNSLECLLGLLSLLLV. A disordered region spans residues 245–305; sequence SQARRGRRGR…SEASILSPEE (61 aa). Over residues 246-258 the composition is skewed to basic residues; the sequence is QARRGRRGRRRGG. Residues 259 to 277 show a composition bias toward low complexity; that stretch reads RALARPRGGSGLRAQPPAS. The segment covering 278 to 292 has biased composition (basic residues); that stretch reads RARRGRRGRRGRRLQ.

The protein localises to the membrane. This chain is Transmembrane protein 271, found in Homo sapiens (Human).